A 318-amino-acid polypeptide reads, in one-letter code: HPr kinase/phosphorylase (318 aa).

Residues His-143 and Lys-164 contribute to the active site. Gly-158–Ser-165 provides a ligand contact to ATP. Ser-165 lines the Mg(2+) pocket. Asp-182 (proton acceptor; for phosphorylation activity. Proton donor; for dephosphorylation activity) is an active-site residue. The segment at Met-206 to Asn-215 is important for the catalytic mechanism of both phosphorylation and dephosphorylation. Residue Glu-207 coordinates Mg(2+). The active site involves Arg-248. An important for the catalytic mechanism of dephosphorylation region spans residues Pro-269–Arg-274.

The protein belongs to the HPrK/P family. As to quaternary structure, homohexamer. It depends on Mg(2+) as a cofactor.

The enzyme catalyses [HPr protein]-L-serine + ATP = [HPr protein]-O-phospho-L-serine + ADP + H(+). It catalyses the reaction [HPr protein]-O-phospho-L-serine + phosphate + H(+) = [HPr protein]-L-serine + diphosphate. Catalyzes the ATP- as well as the pyrophosphate-dependent phosphorylation of a specific serine residue in HPr, a phosphocarrier protein of the phosphoenolpyruvate-dependent sugar phosphotransferase system (PTS). HprK/P also catalyzes the pyrophosphate-producing, inorganic phosphate-dependent dephosphorylation (phosphorolysis) of seryl-phosphorylated HPr (P-Ser-HPr). This chain is HPr kinase/phosphorylase, found in Leptospira borgpetersenii serovar Hardjo-bovis (strain L550).